A 262-amino-acid polypeptide reads, in one-letter code: Acyl-[acyl-carrier-protein]--UDP-N-acetylglucosamine O-acyltransferase (262 aa).

This sequence belongs to the transferase hexapeptide repeat family. LpxA subfamily. Homotrimer.

Its subcellular location is the cytoplasm. The enzyme catalyses a (3R)-hydroxyacyl-[ACP] + UDP-N-acetyl-alpha-D-glucosamine = a UDP-3-O-[(3R)-3-hydroxyacyl]-N-acetyl-alpha-D-glucosamine + holo-[ACP]. It functions in the pathway glycolipid biosynthesis; lipid IV(A) biosynthesis; lipid IV(A) from (3R)-3-hydroxytetradecanoyl-[acyl-carrier-protein] and UDP-N-acetyl-alpha-D-glucosamine: step 1/6. Its function is as follows. Involved in the biosynthesis of lipid A, a phosphorylated glycolipid that anchors the lipopolysaccharide to the outer membrane of the cell. In Burkholderia ambifaria (strain ATCC BAA-244 / DSM 16087 / CCUG 44356 / LMG 19182 / AMMD) (Burkholderia cepacia (strain AMMD)), this protein is Acyl-[acyl-carrier-protein]--UDP-N-acetylglucosamine O-acyltransferase.